Consider the following 197-residue polypeptide: Elongation factor Ts (197 aa).

An involved in Mg(2+) ion dislocation from EF-Tu region spans residues 81–84 (TDFV).

This sequence belongs to the EF-Ts family.

It localises to the cytoplasm. Associates with the EF-Tu.GDP complex and induces the exchange of GDP to GTP. It remains bound to the aminoacyl-tRNA.EF-Tu.GTP complex up to the GTP hydrolysis stage on the ribosome. This is Elongation factor Ts from Thermotoga neapolitana (strain ATCC 49049 / DSM 4359 / NBRC 107923 / NS-E).